An 89-amino-acid chain; its full sequence is Small ribosomal subunit protein uS15 (89 aa).

It belongs to the universal ribosomal protein uS15 family. Part of the 30S ribosomal subunit. Forms a bridge to the 50S subunit in the 70S ribosome, contacting the 23S rRNA.

Its function is as follows. One of the primary rRNA binding proteins, it binds directly to 16S rRNA where it helps nucleate assembly of the platform of the 30S subunit by binding and bridging several RNA helices of the 16S rRNA. In terms of biological role, forms an intersubunit bridge (bridge B4) with the 23S rRNA of the 50S subunit in the ribosome. This chain is Small ribosomal subunit protein uS15, found in Psychromonas ingrahamii (strain DSM 17664 / CCUG 51855 / 37).